We begin with the raw amino-acid sequence, 356 residues long: Uroporphyrinogen decarboxylase (356 aa).

Substrate-binding positions include 23 to 27 (RQAGR), D72, Y148, S203, and H321.

This sequence belongs to the uroporphyrinogen decarboxylase family. As to quaternary structure, homodimer.

The protein resides in the cytoplasm. The catalysed reaction is uroporphyrinogen III + 4 H(+) = coproporphyrinogen III + 4 CO2. The protein operates within porphyrin-containing compound metabolism; protoporphyrin-IX biosynthesis; coproporphyrinogen-III from 5-aminolevulinate: step 4/4. In terms of biological role, catalyzes the decarboxylation of four acetate groups of uroporphyrinogen-III to yield coproporphyrinogen-III. The protein is Uroporphyrinogen decarboxylase of Chloroflexus aggregans (strain MD-66 / DSM 9485).